The chain runs to 234 residues: Sugar fermentation stimulation protein homolog (234 aa).

This sequence belongs to the SfsA family.

The sequence is that of Sugar fermentation stimulation protein homolog from Enterobacter sp. (strain 638).